We begin with the raw amino-acid sequence, 114 residues long: Putative membrane protein insertion efficiency factor (114 aa).

The protein belongs to the UPF0161 family.

Its subcellular location is the cell inner membrane. In terms of biological role, could be involved in insertion of integral membrane proteins into the membrane. This Nitrobacter hamburgensis (strain DSM 10229 / NCIMB 13809 / X14) protein is Putative membrane protein insertion efficiency factor.